The following is a 101-amino-acid chain: Small ribosomal subunit protein uS14 (101 aa).

It belongs to the universal ribosomal protein uS14 family. In terms of assembly, part of the 30S ribosomal subunit. Contacts proteins S3 and S10.

Its function is as follows. Binds 16S rRNA, required for the assembly of 30S particles and may also be responsible for determining the conformation of the 16S rRNA at the A site. This is Small ribosomal subunit protein uS14 from Opitutus terrae (strain DSM 11246 / JCM 15787 / PB90-1).